A 1090-amino-acid polypeptide reads, in one-letter code: Pullulanase (1090 aa).

Residues 1-19 (MLRYTRNALVLGSLVLLSG) form the signal peptide. Cys-20 carries the N-palmitoyl cysteine lipid modification. Cys-20 carries S-diacylglycerol cysteine lipidation. The Nucleophile role is filled by Asp-684. Glu-713 (proton donor) is an active-site residue.

It belongs to the glycosyl hydrolase 13 family. Homotrimer.

It localises to the cell membrane. The enzyme catalyses Hydrolysis of (1-&gt;6)-alpha-D-glucosidic linkages in pullulan, amylopectin and glycogen, and in the alpha- and beta-limit dextrins of amylopectin and glycogen.. This Klebsiella pneumoniae protein is Pullulanase (pulA).